The following is a 295-amino-acid chain: Ethanolamine ammonia-lyase small subunit (295 aa).

3 residues coordinate adenosylcob(III)alamin: valine 207, glutamate 228, and cysteine 258.

Belongs to the EutC family. In terms of assembly, the basic unit is a heterodimer which dimerizes to form tetramers. The heterotetramers trimerize; 6 large subunits form a core ring with 6 small subunits projecting outwards. Adenosylcob(III)alamin is required as a cofactor.

The protein localises to the bacterial microcompartment. The enzyme catalyses ethanolamine = acetaldehyde + NH4(+). It participates in amine and polyamine degradation; ethanolamine degradation. Its function is as follows. Catalyzes the deamination of various vicinal amino-alcohols to oxo compounds. Allows this organism to utilize ethanolamine as the sole source of nitrogen and carbon in the presence of external vitamin B12. The polypeptide is Ethanolamine ammonia-lyase small subunit (Escherichia coli (strain UTI89 / UPEC)).